Consider the following 387-residue polypeptide: Galactokinase (387 aa).

Position 32–35 (32–35 (EHTD)) interacts with substrate. Residues S66 and 123-129 (GAGLSSS) contribute to the ATP site. Mg(2+)-binding residues include S129 and E161. The active-site Proton acceptor is the D173. Y223 is a binding site for substrate.

The protein belongs to the GHMP kinase family. GalK subfamily.

The protein resides in the cytoplasm. The enzyme catalyses alpha-D-galactose + ATP = alpha-D-galactose 1-phosphate + ADP + H(+). It participates in carbohydrate metabolism; galactose metabolism. Its function is as follows. Catalyzes the transfer of the gamma-phosphate of ATP to D-galactose to form alpha-D-galactose-1-phosphate (Gal-1-P). This is Galactokinase from Enterococcus faecalis (strain ATCC 700802 / V583).